Reading from the N-terminus, the 309-residue chain is Probable 4-hydroxy-2-oxoglutarate aldolase, mitochondrial (309 aa).

Substrate is bound at residue 49 to 50; sequence SN. Residue lysine 173 is the Schiff-base intermediate with substrate of the active site.

It belongs to the DapA family.

The catalysed reaction is (4S)-4-hydroxy-2-oxoglutarate = glyoxylate + pyruvate. The enzyme catalyses (4R)-4-hydroxy-2-oxoglutarate = glyoxylate + pyruvate. Inhibited by divalent cations. Catalyzes the final step in the metabolic pathway of hydroxyproline. Involved in osmoadaptation. This is Probable 4-hydroxy-2-oxoglutarate aldolase, mitochondrial from Emericella nidulans (strain FGSC A4 / ATCC 38163 / CBS 112.46 / NRRL 194 / M139) (Aspergillus nidulans).